The sequence spans 479 residues: MVRMRRRRACSSGGACGCAAVRGARSFLSVRVLGMRIGMSALCLAPLFARTASLGAWSSQGGEVLGEVRARVPAHRRVRRAVSGTSVTPVVAMAAKTSEKQKGVGRRALSLRTGGRYEMLGLAFTALADDASFFEANAAGSAAFPYLLVGGFHFARVNQSHTDTIALVHSIGRTGYGFSASVQYPYLTMEGKAVGGVAIFNVAHRFLSAYRFKGISVGTNVKVGYRDSSAGGERNKKNQGGKKHVVVTADIGLQGTWSVAKNFGSHEPNLWVGGTVKNVGLSVEVDASNSGSSMSGGRTVHATNSSFILACAYQPIRWFLFGTGIEWKYNVQEFADNNRFRYGVAFLLLPVQYVAFGSNVFLTGLASDIRASAGVEFKSTWVRVDLTYTYESDKDEHVISCGIAGFFNRDRRKHLEKEVYTSYLRGLRHYDAQHYEEAIAEWRRTLQRAGSFEPAREGIERATKLLQLNRQVYDFHFLH.

The signal sequence occupies residues 1–49; the sequence is MVRMRRRRACSSGGACGCAAVRGARSFLSVRVLGMRIGMSALCLAPLFA.

It belongs to the UPF0164 family.

The polypeptide is UPF0164 protein TP_0865 (Treponema pallidum (strain Nichols)).